The following is a 368-amino-acid chain: MFLKQVWLEQYRNIQKACIQPARHLTVLYGRNGQGKTNFLESLYLLGNARPFRAAKVPDLISHGSRSAAVRGLVLAAGVESTIVLHVENSTRRVTIDDKAVHRAADLHGKLAVVVFSPDDTAMVKLGPETRRRYLDRSLYASDAAFLSDYHTYYRILKQRNALLKTNQQAGLDLWTEQLATAGIRLMQHRQHYTSRLNQLLQQKYQQIAGEQEKVSVVYQPDVICTAEENGTELLLNVFRNQHEQDLRYKSTGRGPHRDDLLFSIGDRPLKSFGSQGQQRSFVLALKMAELDHLQETFGEMPLLLLDDIASELDRERMTNLLSYVRQREVQVLITTTDVTPFLPVLQQDSKLFRVEEGRLTYEGNGTP.

G30–T37 contributes to the ATP binding site.

The protein belongs to the RecF family.

It localises to the cytoplasm. In terms of biological role, the RecF protein is involved in DNA metabolism; it is required for DNA replication and normal SOS inducibility. RecF binds preferentially to single-stranded, linear DNA. It also seems to bind ATP. This chain is DNA replication and repair protein RecF, found in Trichlorobacter lovleyi (strain ATCC BAA-1151 / DSM 17278 / SZ) (Geobacter lovleyi).